The chain runs to 1408 residues: ARF guanine-nucleotide exchange factor 1 (1408 aa).

Ser49 is subject to Phosphoserine. The tract at residues 262–287 is disordered; it reads TTTSDNDLSSTDDDSAVADDNKNEKP. The SEC7 domain occupies 552–706; it reads FNEKAKKGIQ…IIMLNTDSHN (155 aa).

In terms of assembly, interacts (via N-terminal region) with SEC21 (via C-terminus). Interacts with GMH1. Interacts with DRS2.

Its subcellular location is the cytoplasm. The protein resides in the cytosol. It localises to the membrane. The protein localises to the endoplasmic reticulum. It is found in the mitochondrion. Functionally, activates the ARF proteins by exchanging bound GDP for free GTP. Plays a role in maintaining mitochondrial morphology, and in the turnover of mitochondria through mitophagy. In Saccharomyces cerevisiae (strain ATCC 204508 / S288c) (Baker's yeast), this protein is ARF guanine-nucleotide exchange factor 1 (GEA1).